A 298-amino-acid chain; its full sequence is Ribosomal RNA small subunit methyltransferase H (298 aa).

Residues G38–H40, D57, F84, D100, and Q107 contribute to the S-adenosyl-L-methionine site.

Belongs to the methyltransferase superfamily. RsmH family.

Its subcellular location is the cytoplasm. It catalyses the reaction cytidine(1402) in 16S rRNA + S-adenosyl-L-methionine = N(4)-methylcytidine(1402) in 16S rRNA + S-adenosyl-L-homocysteine + H(+). Functionally, specifically methylates the N4 position of cytidine in position 1402 (C1402) of 16S rRNA. The chain is Ribosomal RNA small subunit methyltransferase H from Acaryochloris marina (strain MBIC 11017).